Reading from the N-terminus, the 138-residue chain is Protein FAM136A (138 aa).

Residue Ala2 is modified to N-acetylalanine. Thr124 and Thr126 each carry phosphothreonine.

The protein belongs to the FAM136 family.

The protein is Protein FAM136A (Fam136a) of Mus musculus (Mouse).